The sequence spans 549 residues: TBC1 domain family member 3E (549 aa).

Positions 101-293 (GMPMNIRGPM…RLWDVYLVEG (193 aa)) constitute a Rab-GAP TBC domain. Residues C318 and C325 are each lipidated (S-palmitoyl cysteine). The segment at 350-419 (LTRKKGDLPP…PRSSTPCPGG (70 aa)) is disordered. The span at 398–417 (PRPIWSASPPRAPRSSTPCP) shows a compositional bias: low complexity.

In terms of processing, ubiquitinated by a CUL7-based E3 ligase, which leads to proteasomal degradation. Post-translationally, palmitoylation is required for membrane localization and protects TBC1D3 from ubiquitination. As to expression, expressed in pancreas, thymus and testis.

It is found in the cell membrane. In terms of biological role, acts as a GTPase activating protein for RAB5. Does not act on RAB4 or RAB11. This is TBC1 domain family member 3E from Homo sapiens (Human).